The following is a 578-amino-acid chain: MNIHAIISDQIHKAMLAAGVPPYYRVQVRPSVKKKFGDYQINGLMATAKQLGVPSYFLAKKVVSFLQLNGIARQIDIAGPGFINIYLDSQWLATKIATAIASPRLGISLIELPQTIVVDYSSPNIAKEMHVGHIRSTIIGDASARILDFIGHKVIRINHIGDWGTHFGMLIAYLQQVEKNIDPEIPLSFLDQLYRQAKDKYDTDPSFAQEARNCVVKLQCGDSFCLKIWQKLVKITINENQKIYNRLNISLSHENIMGESKYNNMLPNIIADLKAKGLAVESAGATVIFLNEFQDKQGNPLGVIIQKKDGAYLYTTTDIACIKYRYEQLKADRIIYYVDSRQHQHLKQIWTIVRKAGYIPQTMQLDHHMFGMIFDKEGKPFKTRVGVNIKLNDLLDEALKRARCLILSKNMDVDPVELEHLAQVISISAIKYAELSKNRTTDYIFNWDDMLSFEGNTAPYILYAYTRIASILKRSNYNKQQILTGSILLEKEHEHLLAVRLLQYHETITTVAHDGRPHILCGYLYNLAVRFSSFYEHCSIINANSDIQRKSRLQLALLTSKTLQHGLSLLGIETVDKM.

The 'HIGH' region signature appears at 123–133 (PNIAKEMHVGH).

It belongs to the class-I aminoacyl-tRNA synthetase family. As to quaternary structure, monomer.

The protein localises to the cytoplasm. It catalyses the reaction tRNA(Arg) + L-arginine + ATP = L-arginyl-tRNA(Arg) + AMP + diphosphate. The sequence is that of Arginine--tRNA ligase from Baumannia cicadellinicola subsp. Homalodisca coagulata.